The chain runs to 465 residues: ATP synthase subunit beta (465 aa).

152–159 is an ATP binding site; it reads GGAGVGKT.

The protein belongs to the ATPase alpha/beta chains family. F-type ATPases have 2 components, CF(1) - the catalytic core - and CF(0) - the membrane proton channel. CF(1) has five subunits: alpha(3), beta(3), gamma(1), delta(1), epsilon(1). CF(0) has three main subunits: a(1), b(2) and c(9-12). The alpha and beta chains form an alternating ring which encloses part of the gamma chain. CF(1) is attached to CF(0) by a central stalk formed by the gamma and epsilon chains, while a peripheral stalk is formed by the delta and b chains.

It is found in the cell inner membrane. It catalyses the reaction ATP + H2O + 4 H(+)(in) = ADP + phosphate + 5 H(+)(out). Its function is as follows. Produces ATP from ADP in the presence of a proton gradient across the membrane. The catalytic sites are hosted primarily by the beta subunits. The sequence is that of ATP synthase subunit beta from Campylobacter curvus (strain 525.92).